The chain runs to 333 residues: Late embryogenesis abundant protein 1 (333 aa).

Disordered stretches follow at residues 1-20 (MASRQDRREARAEADARRAA) and 116-246 (KDYT…GQGQ). The stretch at 3–52 (SRQDRREARAEADARRAAEEIARARDERVMQAEVDARSAADEIARARADR) forms a coiled coil. Basic and acidic residues-rich tracts occupy residues 116–163 (KDYT…KDAV), 172–219 (EATK…DATK), and 227–241 (DKARETAATHDDATD).

Belongs to the LEA type 4 family.

The protein is Late embryogenesis abundant protein 1 (LEA1) of Oryza sativa subsp. indica (Rice).